Consider the following 619-residue polypeptide: Dihydroxy-acid dehydratase 1 (619 aa).

Asp81 contributes to the Mg(2+) binding site. Residue Cys122 coordinates [2Fe-2S] cluster. Residues Asp123 and Lys124 each contribute to the Mg(2+) site. The residue at position 124 (Lys124) is an N6-carboxylysine. Position 198 (Cys198) interacts with [2Fe-2S] cluster. Glu494 contacts Mg(2+). The active-site Proton acceptor is the Ser520.

The protein belongs to the IlvD/Edd family. As to quaternary structure, homodimer. It depends on [2Fe-2S] cluster as a cofactor. Mg(2+) serves as cofactor.

The enzyme catalyses (2R)-2,3-dihydroxy-3-methylbutanoate = 3-methyl-2-oxobutanoate + H2O. The catalysed reaction is (2R,3R)-2,3-dihydroxy-3-methylpentanoate = (S)-3-methyl-2-oxopentanoate + H2O. It functions in the pathway amino-acid biosynthesis; L-isoleucine biosynthesis; L-isoleucine from 2-oxobutanoate: step 3/4. The protein operates within amino-acid biosynthesis; L-valine biosynthesis; L-valine from pyruvate: step 3/4. Functionally, functions in the biosynthesis of branched-chain amino acids. Catalyzes the dehydration of (2R,3R)-2,3-dihydroxy-3-methylpentanoate (2,3-dihydroxy-3-methylvalerate) into 2-oxo-3-methylpentanoate (2-oxo-3-methylvalerate) and of (2R)-2,3-dihydroxy-3-methylbutanoate (2,3-dihydroxyisovalerate) into 2-oxo-3-methylbutanoate (2-oxoisovalerate), the penultimate precursor to L-isoleucine and L-valine, respectively. This chain is Dihydroxy-acid dehydratase 1, found in Bordetella pertussis (strain Tohama I / ATCC BAA-589 / NCTC 13251).